The primary structure comprises 476 residues: ATP synthase subunit beta (476 aa).

Position 154–161 (154–161 (GGAGVGKT)) interacts with ATP.

The protein belongs to the ATPase alpha/beta chains family. In terms of assembly, F-type ATPases have 2 components, CF(1) - the catalytic core - and CF(0) - the membrane proton channel. CF(1) has five subunits: alpha(3), beta(3), gamma(1), delta(1), epsilon(1). CF(0) has four main subunits: a(1), b(1), b'(1) and c(9-12).

The protein resides in the cell inner membrane. It catalyses the reaction ATP + H2O + 4 H(+)(in) = ADP + phosphate + 5 H(+)(out). Its function is as follows. Produces ATP from ADP in the presence of a proton gradient across the membrane. The catalytic sites are hosted primarily by the beta subunits. The polypeptide is ATP synthase subunit beta (Rhodopseudomonas palustris (strain HaA2)).